The chain runs to 147 residues: Endoribonuclease YbeY (147 aa).

Histidine 111, histidine 115, and aspartate 121 together coordinate Zn(2+).

It belongs to the endoribonuclease YbeY family. Zn(2+) is required as a cofactor.

The protein resides in the cytoplasm. In terms of biological role, single strand-specific metallo-endoribonuclease involved in late-stage 70S ribosome quality control and in maturation of the 3' terminus of the 16S rRNA. The polypeptide is Endoribonuclease YbeY (Amoebophilus asiaticus (strain 5a2)).